The sequence spans 291 residues: tRNA dimethylallyltransferase (291 aa).

8–15 is a binding site for ATP; sequence GSTASGKT. 10–15 is a substrate binding site; sequence TASGKT. Residues 33-36 are interaction with substrate tRNA; sequence DSLC.

This sequence belongs to the IPP transferase family. Monomer. Mg(2+) serves as cofactor.

The catalysed reaction is adenosine(37) in tRNA + dimethylallyl diphosphate = N(6)-dimethylallyladenosine(37) in tRNA + diphosphate. Catalyzes the transfer of a dimethylallyl group onto the adenine at position 37 in tRNAs that read codons beginning with uridine, leading to the formation of N6-(dimethylallyl)adenosine (i(6)A). This Aliarcobacter butzleri (strain RM4018) (Arcobacter butzleri) protein is tRNA dimethylallyltransferase.